Here is an 838-residue protein sequence, read N- to C-terminus: V-type proton ATPase 116 kDa subunit a 1 (838 aa).

Residues 1–388 lie on the Cytoplasmic side of the membrane; sequence MGELFRSEEM…DAYGIGTYRE (388 aa). T250 and T360 each carry phosphothreonine. Y364 is subject to Phosphotyrosine. A helical membrane pass occupies residues 389 to 407; the sequence is INPAPYTVITFPFLFAVMF. Residues 408–409 lie on the Vacuolar side of the membrane; it reads GD. Residues 410-426 form a helical membrane-spanning segment; it reads FGHGILMTLFAVWMVLR. The Cytoplasmic portion of the chain corresponds to 427–441; sequence ESRILSQKNENEMFS. The helical transmembrane segment at 442-471 threads the bilayer; it reads MVFSGRYIILLMGLFSIYTGLIYNDCFSKS. At 472 to 535 the chain is on the vacuolar side; it reads LNIFGSSWSV…ATNKLTFLNS (64 aa). The chain crosses the membrane as a helical span at residues 536–555; sequence FKMKMSVILGIIHMLFGVSL. At 556 to 573 the chain is on the cytoplasmic side; that stretch reads SLFNHIYFKKPLNIYFGF. The chain crosses the membrane as a helical span at residues 574–594; it reads IPEIIFMSSLFGYLVILIFYK. The Vacuolar portion of the chain corresponds to 595–639; that stretch reads WTAYDAHSSRNAPSLLIHFINMFLFSYPESGNAMLYSGQKGIQCF. Residues 640–659 form a helical membrane-spanning segment; that stretch reads LIVVAMLCVPWMLLFKPLIL. At 660–725 the chain is on the cytoplasmic side; that stretch reads RHQYLRKKHL…DTMVHQAIHT (66 aa). A helical membrane pass occupies residues 726–750; it reads IEYCLGCISNTASYLRLWALSLAHA. Residues 751-771 lie on the Vacuolar side of the membrane; that stretch reads QLSEVLWTMVIHIGLHVRSLA. The helical transmembrane segment at 772–810 threads the bilayer; the sequence is GGLGLFFIFAAFATLTVAILLIMEGLSAFLHALRLHWVE. Topologically, residues 811-838 are cytoplasmic; the sequence is FQNKFYTGTGFKFLPFSFEHIREGKFDE.

This sequence belongs to the V-ATPase 116 kDa subunit family. V-ATPase is a heteromultimeric enzyme made up of two complexes: the ATP-hydrolytic V1 complex and the proton translocation V0 complex. The V1 complex consists of three catalytic AB heterodimers that form a heterohexamer, three peripheral stalks each consisting of EG heterodimers, one central rotor including subunits D and F, and the regulatory subunits C and H. The proton translocation complex V0 consists of the proton transport subunit a, a ring of proteolipid subunits c9c'', rotary subunit d, subunits e and f, and the accessory subunits ATP6AP1/Ac45 and ATP6AP2/PRR. Interacts with SPAAR. Expressed in brain (at protein level). In terms of tissue distribution, expressed in heart, kidney, liver, spleen, and to a lesser extent in brain.

Its subcellular location is the cytoplasmic vesicle. It is found in the clathrin-coated vesicle membrane. The protein resides in the secretory vesicle. The protein localises to the synaptic vesicle membrane. It localises to the melanosome. Subunit of the V0 complex of vacuolar(H+)-ATPase (V-ATPase), a multisubunit enzyme composed of a peripheral complex (V1) that hydrolyzes ATP and a membrane integral complex (V0) that translocates protons. V-ATPase is responsible for the acidification of various organelles, such as lysosomes, endosomes, the trans-Golgi network, and secretory granules, including synaptic vesicles. In certain cell types, can be exported to the plasma membrane, where it is involved in the acidification of the extracellular environment. Required for assembly and activity of the vacuolar ATPase. Through its action on compartment acidification, plays an essential role in neuronal development in terms of integrity and connectivity of neurons. This is V-type proton ATPase 116 kDa subunit a 1 (Atp6v0a1) from Rattus norvegicus (Rat).